Reading from the N-terminus, the 558-residue chain is Oligo-1,6-glucosidase (558 aa).

Residues D21, N23, D25, and D29 each coordinate Ca(2+). D199 acts as the Nucleophile in catalysis. The active-site Proton donor is E255.

The protein belongs to the glycosyl hydrolase 13 family.

It localises to the cytoplasm. The enzyme catalyses Hydrolysis of (1-&gt;6)-alpha-D-glucosidic linkages in some oligosaccharides produced from starch and glycogen by alpha-amylase, and in isomaltose.. This chain is Oligo-1,6-glucosidase (malL), found in Bacillus cereus.